The following is a 752-amino-acid chain: Cation-transporting P-type ATPase B (752 aa).

Positions 15–78 (RRIRLDVLGM…VVEKAGYHAA (64 aa)) constitute an HMA domain. Residues Cys26 and Cys29 each contribute to the a metal cation site. Helical transmembrane passes span 105 to 125 (LLVA…FAIV), 132 to 152 (GWGY…AWPF), 167 to 187 (METL…SSVF), 201 to 221 (AILN…VFVL), 361 to 381 (IAGV…AAWL), and 390 to 410 (AFSV…GLAT). Asp446 serves as the catalytic 4-aspartylphosphate intermediate. Transmembrane regions (helical) follow at residues 491–511 (MAAA…FVAV) and 714–734 (AIPI…AMAF).

Belongs to the cation transport ATPase (P-type) (TC 3.A.3) family. Type IB subfamily.

The protein localises to the cell membrane. It carries out the reaction ATP + H2O = ADP + phosphate + H(+). In Mycobacterium tuberculosis (strain ATCC 25618 / H37Rv), this protein is Cation-transporting P-type ATPase B (ctpB).